Here is a 202-residue protein sequence, read N- to C-terminus: Imidazoleglycerol-phosphate dehydratase (202 aa).

This sequence belongs to the imidazoleglycerol-phosphate dehydratase family.

It localises to the cytoplasm. The catalysed reaction is D-erythro-1-(imidazol-4-yl)glycerol 3-phosphate = 3-(imidazol-4-yl)-2-oxopropyl phosphate + H2O. It functions in the pathway amino-acid biosynthesis; L-histidine biosynthesis; L-histidine from 5-phospho-alpha-D-ribose 1-diphosphate: step 6/9. The chain is Imidazoleglycerol-phosphate dehydratase from Salinibacter ruber (strain DSM 13855 / M31).